We begin with the raw amino-acid sequence, 434 residues long: Probable phosphoglucosamine mutase (434 aa).

Residue Ser-91 is the Phosphoserine intermediate of the active site. Positions 91, 229, 231, and 233 each coordinate Mg(2+). Ser-91 carries the post-translational modification Phosphoserine.

It belongs to the phosphohexose mutase family. Mg(2+) serves as cofactor. Activated by phosphorylation.

It carries out the reaction alpha-D-glucosamine 1-phosphate = D-glucosamine 6-phosphate. Functionally, catalyzes the conversion of glucosamine-6-phosphate to glucosamine-1-phosphate. This Methanosarcina acetivorans (strain ATCC 35395 / DSM 2834 / JCM 12185 / C2A) protein is Probable phosphoglucosamine mutase.